The following is a 705-amino-acid chain: Crooked neck-like protein 1 (705 aa).

HAT repeat units lie at residues Asp55–Ser87, Lys89–Lys121, Lys123–Met155, Gly157–Arg188, Lys190–Arg221, Gly223–Lys258, Lys260–Gln294, Val304–Ile336, Gly338–Asn372, Lys382–Arg418, Leu420–Glu451, Gly453–Glu485, Gly487–Gln521, and Lys523–Ser554. The segment at Gln559–Asn591 is disordered. The stretch at Ile597–Asn629 is one HAT 15 repeat.

This sequence belongs to the crooked-neck family. In terms of assembly, identified in the spliceosome C complex.

It is found in the nucleus. It localises to the nucleus speckle. Its function is as follows. Involved in pre-mRNA splicing process. This is Crooked neck-like protein 1 (crnkl1) from Dictyostelium discoideum (Social amoeba).